Reading from the N-terminus, the 279-residue chain is Bifunctional protein FolD (279 aa).

Residues 165–167, serine 190, and isoleucine 231 contribute to the NADP(+) site; that span reads GRS.

The protein belongs to the tetrahydrofolate dehydrogenase/cyclohydrolase family. In terms of assembly, homodimer.

It carries out the reaction (6R)-5,10-methylene-5,6,7,8-tetrahydrofolate + NADP(+) = (6R)-5,10-methenyltetrahydrofolate + NADPH. The catalysed reaction is (6R)-5,10-methenyltetrahydrofolate + H2O = (6R)-10-formyltetrahydrofolate + H(+). The protein operates within one-carbon metabolism; tetrahydrofolate interconversion. Functionally, catalyzes the oxidation of 5,10-methylenetetrahydrofolate to 5,10-methenyltetrahydrofolate and then the hydrolysis of 5,10-methenyltetrahydrofolate to 10-formyltetrahydrofolate. The chain is Bifunctional protein FolD from Halalkalibacterium halodurans (strain ATCC BAA-125 / DSM 18197 / FERM 7344 / JCM 9153 / C-125) (Bacillus halodurans).